Here is a 337-residue protein sequence, read N- to C-terminus: Glyceraldehyde-3-phosphate dehydrogenase (337 aa).

Residues 12 to 13 (RI), D36, R80, and S122 each bind NAD(+). Residues 153–155 (SCT) and T184 contribute to the D-glyceraldehyde 3-phosphate site. The active-site Nucleophile is C154. Position 185 (N185) interacts with NAD(+). D-glyceraldehyde 3-phosphate contacts are provided by residues R199, 212-213 (TG), and R235. Position 318 (N318) interacts with NAD(+).

It belongs to the glyceraldehyde-3-phosphate dehydrogenase family. As to quaternary structure, homotetramer.

The protein resides in the cytoplasm. The enzyme catalyses D-glyceraldehyde 3-phosphate + phosphate + NAD(+) = (2R)-3-phospho-glyceroyl phosphate + NADH + H(+). The protein operates within carbohydrate degradation; glycolysis; pyruvate from D-glyceraldehyde 3-phosphate: step 1/5. Its function is as follows. Catalyzes the oxidative phosphorylation of glyceraldehyde 3-phosphate (G3P) to 1,3-bisphosphoglycerate (BPG) using the cofactor NAD. The first reaction step involves the formation of a hemiacetal intermediate between G3P and a cysteine residue, and this hemiacetal intermediate is then oxidized to a thioester, with concomitant reduction of NAD to NADH. The reduced NADH is then exchanged with the second NAD, and the thioester is attacked by a nucleophilic inorganic phosphate to produce BPG. The protein is Glyceraldehyde-3-phosphate dehydrogenase (gap) of Zymomonas mobilis subsp. mobilis (strain ATCC 31821 / ZM4 / CP4).